The primary structure comprises 266 residues: Glucosamine-6-phosphate deaminase (266 aa).

D72 acts as the Proton acceptor; for enolization step in catalysis. The active-site For ring-opening step is the D141. The active-site Proton acceptor; for ring-opening step is H143. E148 functions as the For ring-opening step in the catalytic mechanism.

This sequence belongs to the glucosamine/galactosamine-6-phosphate isomerase family. NagB subfamily. In terms of assembly, homohexamer.

It catalyses the reaction alpha-D-glucosamine 6-phosphate + H2O = beta-D-fructose 6-phosphate + NH4(+). It functions in the pathway amino-sugar metabolism; N-acetylneuraminate degradation; D-fructose 6-phosphate from N-acetylneuraminate: step 5/5. With respect to regulation, allosterically activated by N-acetylglucosamine 6-phosphate (GlcNAc6P). Its function is as follows. Catalyzes the reversible isomerization-deamination of glucosamine 6-phosphate (GlcN6P) to form fructose 6-phosphate (Fru6P) and ammonium ion. This is Glucosamine-6-phosphate deaminase from Aeromonas salmonicida (strain A449).